Consider the following 590-residue polypeptide: Aspartate--tRNA ligase (590 aa).

Position 172 (E172) interacts with L-aspartate. The interval 196–199 (QLFK) is aspartate. R218 contributes to the L-aspartate binding site. ATP contacts are provided by residues 218–220 (RDE) and Q227. Position 449 (H449) interacts with L-aspartate. E483 contacts ATP. R490 is a binding site for L-aspartate. 535–538 (GLDR) serves as a coordination point for ATP.

It belongs to the class-II aminoacyl-tRNA synthetase family. Type 1 subfamily. In terms of assembly, homodimer.

Its subcellular location is the cytoplasm. It carries out the reaction tRNA(Asp) + L-aspartate + ATP = L-aspartyl-tRNA(Asp) + AMP + diphosphate. In terms of biological role, catalyzes the attachment of L-aspartate to tRNA(Asp) in a two-step reaction: L-aspartate is first activated by ATP to form Asp-AMP and then transferred to the acceptor end of tRNA(Asp). The chain is Aspartate--tRNA ligase from Glaesserella parasuis serovar 5 (strain SH0165) (Haemophilus parasuis).